Reading from the N-terminus, the 413-residue chain is Multidrug resistance protein MdtA (413 aa).

A signal peptide spans 1-20; sequence MKGSNTFRWAIAIGVVVAAA. Disordered regions lie at residues 31–57 and 391–413; these read SPTA…RDGP and EPQT…GARA. Over residues 32-49 the composition is skewed to low complexity; the sequence is PTAAPGVAAQAQHTAAAG. The segment covering 397–413 has biased composition (basic and acidic residues); the sequence is ADEKSPSRHEGQKGARA.

It belongs to the membrane fusion protein (MFP) (TC 8.A.1) family. Part of a tripartite efflux system composed of MdtA, MdtB and MdtC.

It localises to the cell inner membrane. This is Multidrug resistance protein MdtA from Salmonella typhi.